Here is a 155-residue protein sequence, read N- to C-terminus: SsrA-binding protein (155 aa).

This sequence belongs to the SmpB family.

It localises to the cytoplasm. Its function is as follows. Required for rescue of stalled ribosomes mediated by trans-translation. Binds to transfer-messenger RNA (tmRNA), required for stable association of tmRNA with ribosomes. tmRNA and SmpB together mimic tRNA shape, replacing the anticodon stem-loop with SmpB. tmRNA is encoded by the ssrA gene; the 2 termini fold to resemble tRNA(Ala) and it encodes a 'tag peptide', a short internal open reading frame. During trans-translation Ala-aminoacylated tmRNA acts like a tRNA, entering the A-site of stalled ribosomes, displacing the stalled mRNA. The ribosome then switches to translate the ORF on the tmRNA; the nascent peptide is terminated with the 'tag peptide' encoded by the tmRNA and targeted for degradation. The ribosome is freed to recommence translation, which seems to be the essential function of trans-translation. The polypeptide is SsrA-binding protein (Streptococcus suis (strain 98HAH33)).